Here is a 626-residue protein sequence, read N- to C-terminus: 4-hydroxy-3-methylbut-2-en-1-yl diphosphate synthase (flavodoxin) (626 aa).

The [4Fe-4S] cluster site is built by Cys521, Cys524, Cys555, and Glu562.

It belongs to the IspG family. Requires [4Fe-4S] cluster as cofactor.

The catalysed reaction is (2E)-4-hydroxy-3-methylbut-2-enyl diphosphate + oxidized [flavodoxin] + H2O + 2 H(+) = 2-C-methyl-D-erythritol 2,4-cyclic diphosphate + reduced [flavodoxin]. It functions in the pathway isoprenoid biosynthesis; isopentenyl diphosphate biosynthesis via DXP pathway; isopentenyl diphosphate from 1-deoxy-D-xylulose 5-phosphate: step 5/6. Converts 2C-methyl-D-erythritol 2,4-cyclodiphosphate (ME-2,4cPP) into 1-hydroxy-2-methyl-2-(E)-butenyl 4-diphosphate. The chain is 4-hydroxy-3-methylbut-2-en-1-yl diphosphate synthase (flavodoxin) from Bacteroides fragilis (strain YCH46).